The primary structure comprises 125 residues: Large ribosomal subunit protein bL12 (125 aa).

Belongs to the bacterial ribosomal protein bL12 family. In terms of assembly, homodimer. Part of the ribosomal stalk of the 50S ribosomal subunit. Forms a multimeric L10(L12)X complex, where L10 forms an elongated spine to which 2 to 4 L12 dimers bind in a sequential fashion. Binds GTP-bound translation factors.

Its function is as follows. Forms part of the ribosomal stalk which helps the ribosome interact with GTP-bound translation factors. Is thus essential for accurate translation. In Alkalilimnicola ehrlichii (strain ATCC BAA-1101 / DSM 17681 / MLHE-1), this protein is Large ribosomal subunit protein bL12.